A 336-amino-acid polypeptide reads, in one-letter code: Homoserine dehydrogenase (336 aa).

Phe-8 contacts NADPH. Residues Ala-10, Ile-11, and Thr-94 each coordinate NAD(+). Positions 11, 94, and 123 each coordinate NADPH. NADP(+)-binding residues include Ile-11, Thr-94, and Lys-123. Glu-147, Val-150, and Gly-152 together coordinate Na(+). NADP(+)-binding residues include Gly-205 and Glu-208. The L-homoserine site is built by Glu-208 and Asp-219. The active-site Proton donor is Lys-223. Gly-315 serves as a coordination point for NADPH. Gly-315 provides a ligand contact to NAD(+). Residue Gly-315 participates in NADP(+) binding.

This sequence belongs to the homoserine dehydrogenase family. A metal cation serves as cofactor.

The enzyme catalyses L-homoserine + NADP(+) = L-aspartate 4-semialdehyde + NADPH + H(+). The catalysed reaction is L-homoserine + NAD(+) = L-aspartate 4-semialdehyde + NADH + H(+). It participates in amino-acid biosynthesis; L-methionine biosynthesis via de novo pathway; L-homoserine from L-aspartate: step 3/3. It functions in the pathway amino-acid biosynthesis; L-threonine biosynthesis; L-threonine from L-aspartate: step 3/5. Functionally, catalyzes the conversion of L-aspartate-beta-semialdehyde (L-Asa) to L-homoserine (L-Hse), the third step in the biosynthesis of threonine and methionine from aspartate. This chain is Homoserine dehydrogenase (hom), found in Methanocaldococcus jannaschii (strain ATCC 43067 / DSM 2661 / JAL-1 / JCM 10045 / NBRC 100440) (Methanococcus jannaschii).